A 398-amino-acid polypeptide reads, in one-letter code: MRKSIVLAADNAYLIPLETTIKSVLYHNRDVDFYILNSDIAPEWFKLLGRKMEVVNSTIRSVHIDKELFESYKTGPHINYASYFRFFATEVVESDRVLYLDSDIIVTGELATLFEIDLKGYSIGAVDDVYAYEGRKSGFNTGMLLMDVAKWKEHSIVNSLLELAAEQNQVVHLGDQSILNIYFEDNWLALDKTYNYMVGIDIYHLAQECERLDDNPPTIVHYASHDKPWNTYSISRLRELWWVYRDLDWSEIAFQRSDLNYFERSNQSKKQVMLVTWSADIKHLEYLVQRLPDWHFHLAAPCDCSEELTSLSQYTNVTVYQNVLHSRIDWLLDDSIVYLDINTGGEVFNVVTRAQESGKKIFAFDITRKSMDDGLYDGIFSVERPDDLVDRMKNIEIE.

Positions 1–259 (MRKSIVLAAD…SEIAFQRSDL (259 aa)) are GT8 domain. UDP contacts are provided by residues 8 to 13 (AADNAY) and 101 to 102 (DS). Residues Asp-101, Asp-103, and His-221 each coordinate Mn(2+). 221 to 227 (HYASHDK) contributes to the UDP binding site.

In the N-terminal section; belongs to the glycosyltransferase 8 family.

Its function is as follows. May be involved in the polymorphic O-glycosylation of the serine-rich repeat protein PsrP. Has hydrolytic activity against UDP-galactose and to a lesser extent against UDP-glucose; no glycosyltransferase activity has been seen with tested substrates. The protein is Glycosyltransferase GlyF of Streptococcus pneumoniae serotype 4 (strain ATCC BAA-334 / TIGR4).